Here is a 506-residue protein sequence, read N- to C-terminus: Trans-cinnamate 4-monooxygenase (506 aa).

Residues 3 to 23 (LLLLEKTLIGLFLAAVVAIAV) traverse the membrane as a helical segment. (E)-cinnamate-binding positions include 213 to 218 (RSRLAQ) and Ala307. Cys448 lines the heme pocket.

This sequence belongs to the cytochrome P450 family. The cofactor is heme.

The protein localises to the membrane. The catalysed reaction is (E)-cinnamate + reduced [NADPH--hemoprotein reductase] + O2 = (E)-4-coumarate + oxidized [NADPH--hemoprotein reductase] + H2O + H(+). Its pathway is phenylpropanoid metabolism; trans-4-coumarate biosynthesis; trans-4-coumarate from trans-cinnamate: step 1/1. In terms of biological role, catalyzes the first oxidative step of the phenylpropanoid pathway in higher plants by transforming trans-cinnamate into p-coumarate. The compounds formed by this pathway are essential components for lignification, pollination, and defense against ultraviolet light, predators and pathogens. This chain is Trans-cinnamate 4-monooxygenase (CYP73A11), found in Glycine max (Soybean).